The sequence spans 353 residues: Cellulose-complementing protein (353 aa).

Disordered regions lie at residues 1–21, 75–94, and 117–337; these read MSASGSDEVAGGGQAGSPQDF, PQIAVAPPPPPVVPDPPAIV, and AVPA…SPRP. Residues 80 to 91 are compositionally biased toward pro residues; sequence APPPPPVVPDPP. 2 stretches are compositionally biased toward low complexity: residues 117–132 and 142–164; these read AVPAEPPVQEAPVQAA and IAEQAPPAAPDPASVPYANVAAA. Positions 165–175 are enriched in pro residues; sequence PVPPDPAPVTP. Composition is skewed to polar residues over residues 196 to 226 and 278 to 304; these read QVRTVQEGATPSRVPSRSMNAFPRTSASSIS and STRSVRSNVSRMTSMTKTDTNSSQASR.

The chain is Cellulose-complementing protein (ccpAX) from Komagataeibacter xylinus (Gluconacetobacter xylinus).